The primary structure comprises 262 residues: Small ribosomal subunit protein eS1 (262 aa).

Residues 1–18 (MAVGKNKRISKGKKGSKK) show a composition bias toward basic residues. The tract at residues 1 to 20 (MAVGKNKRISKGKKGSKKKT) is disordered.

This sequence belongs to the eukaryotic ribosomal protein eS1 family. In terms of assembly, component of the small ribosomal subunit. Mature ribosomes consist of a small (40S) and a large (60S) subunit. The 40S subunit contains about 33 different proteins and 1 molecule of RNA (18S). The 60S subunit contains about 49 different proteins and 3 molecules of RNA (25S, 5.8S and 5S).

It is found in the cytoplasm. This chain is Small ribosomal subunit protein eS1, found in Oryza sativa subsp. japonica (Rice).